The following is a 210-amino-acid chain: Ribosomal RNA large subunit methyltransferase E (210 aa).

S-adenosyl-L-methionine contacts are provided by G64, W66, D84, D100, and D125. Residue K165 is the Proton acceptor of the active site.

It belongs to the class I-like SAM-binding methyltransferase superfamily. RNA methyltransferase RlmE family.

The protein localises to the cytoplasm. It carries out the reaction uridine(2552) in 23S rRNA + S-adenosyl-L-methionine = 2'-O-methyluridine(2552) in 23S rRNA + S-adenosyl-L-homocysteine + H(+). Its function is as follows. Specifically methylates the uridine in position 2552 of 23S rRNA at the 2'-O position of the ribose in the fully assembled 50S ribosomal subunit. In Chromohalobacter salexigens (strain ATCC BAA-138 / DSM 3043 / CIP 106854 / NCIMB 13768 / 1H11), this protein is Ribosomal RNA large subunit methyltransferase E.